The following is a 411-amino-acid chain: MPATEILNRADIVKAPQVRPQPQTEKPSLIGLLREDMAKLLVEKGVPERQVKMRVSQLWHWLYVRGVSDFDQMSNVSKDMREMLKEHFTVARPEIVEEQVSGDGTRKWLLRFPPRGAGRPVEIETVYIPEEGRGTLCISSQVGCTLTCSFCHTGTQKLVRNLTAEEILAQLLLARDRLGDFPERDTPQGAIVPAEGRKITNIVMMGMGEPLYNFDNVKTALLIASDGDGLSLSKRRITLSTSGIVPEIYRTGEEIGVMLAISLHAVNDELRDMLVPINKKYPLKELMEACRAYPGLSNARRITFEYVMLKDVNDSLQDAKELVKLLKGIPAKINLIPFNPWPGTNYQCSDWEQIEAFADFINQAGYASPIRTPRGRDILAACGQLKSESERMRKVDRLAFEAMMIANHGED.

Glu-124 serves as the catalytic Proton acceptor. The Radical SAM core domain occupies 130 to 379 (EEGRGTLCIS…IRTPRGRDIL (250 aa)). Cys-137 and Cys-382 are oxidised to a cystine. Residues Cys-144, Cys-148, and Cys-151 each contribute to the [4Fe-4S] cluster site. S-adenosyl-L-methionine-binding positions include 208 to 209 (GE), Ser-240, 262 to 264 (SLH), and Asn-339. Cys-382 acts as the S-methylcysteine intermediate in catalysis.

Belongs to the radical SAM superfamily. RlmN family. [4Fe-4S] cluster serves as cofactor.

The protein localises to the cytoplasm. It catalyses the reaction adenosine(2503) in 23S rRNA + 2 reduced [2Fe-2S]-[ferredoxin] + 2 S-adenosyl-L-methionine = 2-methyladenosine(2503) in 23S rRNA + 5'-deoxyadenosine + L-methionine + 2 oxidized [2Fe-2S]-[ferredoxin] + S-adenosyl-L-homocysteine. It carries out the reaction adenosine(37) in tRNA + 2 reduced [2Fe-2S]-[ferredoxin] + 2 S-adenosyl-L-methionine = 2-methyladenosine(37) in tRNA + 5'-deoxyadenosine + L-methionine + 2 oxidized [2Fe-2S]-[ferredoxin] + S-adenosyl-L-homocysteine. In terms of biological role, specifically methylates position 2 of adenine 2503 in 23S rRNA and position 2 of adenine 37 in tRNAs. m2A2503 modification seems to play a crucial role in the proofreading step occurring at the peptidyl transferase center and thus would serve to optimize ribosomal fidelity. The chain is Dual-specificity RNA methyltransferase RlmN from Sinorhizobium fredii (strain NBRC 101917 / NGR234).